The sequence spans 271 residues: Probable ribosomal RNA small subunit methyltransferase A (271 aa).

Residues N22, L24, G49, E70, D97, and N112 each coordinate S-adenosyl-L-methionine.

It belongs to the class I-like SAM-binding methyltransferase superfamily. rRNA adenine N(6)-methyltransferase family. RsmA subfamily.

Its subcellular location is the cytoplasm. Functionally, specifically dimethylates two adjacent adenosines in the loop of a conserved hairpin near the 3'-end of 16S rRNA in the 30S particle. May play a critical role in biogenesis of 30S subunits. This Methanosphaera stadtmanae (strain ATCC 43021 / DSM 3091 / JCM 11832 / MCB-3) protein is Probable ribosomal RNA small subunit methyltransferase A.